Consider the following 301-residue polypeptide: Mitochondrial import receptor subunit TOM40 homolog (301 aa).

Residues 1–20 (MATPTESEFAAPIPQTNPGS) form a disordered region.

Belongs to the Tom40 family. As to quaternary structure, forms part of the preprotein translocase complex of the outer mitochondrial membrane (TOM complex). Interacts with mitochondrial targeting sequences.

The protein resides in the mitochondrion outer membrane. Functionally, channel-forming protein essential for import of protein precursors into mitochondria. Specifically required for nnt-1 accumulation in the mitochondria and may be involved in the secretion of daf-28/insulin from the mitochondria. Required for embryonic and larval development. This Caenorhabditis briggsae protein is Mitochondrial import receptor subunit TOM40 homolog.